A 206-amino-acid polypeptide reads, in one-letter code: Protein GET1 (206 aa).

At 1-4 (MPSL) the chain is on the lumenal side. A helical membrane pass occupies residues 5 to 24 (LITVLFLNVIIYVVNTVGAA). Topologically, residues 25-110 (TVDGLLWLLY…TFDMTIKIAR (86 aa)) are cytoplasmic. A coiled-coil region spans residues 75–100 (AKLRRRHDKALEAYEAKNNELTQSKS). The chain crosses the membrane as a helical span at residues 111–131 (WAATSGLMLFLQFWYSKTPIF). The Lumenal portion of the chain corresponds to 132–155 (TLPPGWIPWQVQWVLSFPRAPMGT). A helical membrane pass occupies residues 156 to 172 (VSIQIWGGACATVVALV). Over 173-206 (GDAMKASLAYVSKPKIDRIKLGATMEGKEGKKRQ) the chain is Cytoplasmic.

Belongs to the WRB/GET1 family. In terms of assembly, interacts with GET3.

The protein resides in the endoplasmic reticulum membrane. Its function is as follows. Required for the post-translational delivery of tail-anchored (TA) proteins to the endoplasmic reticulum. Acts as a membrane receptor for soluble GET3, which recognizes and selectively binds the transmembrane domain of TA proteins in the cytosol. The sequence is that of Protein GET1 from Ajellomyces capsulatus (strain G186AR / H82 / ATCC MYA-2454 / RMSCC 2432) (Darling's disease fungus).